A 195-amino-acid chain; its full sequence is Protein SYM1 (195 aa).

The next 4 helical transmembrane spans lie at 21–39, 55–71, 98–115, and 159–175; these read GIMT…QVGF, AVVY…DSWY, LLFA…MSIL, and LFSV…FLSF.

It belongs to the peroxisomal membrane protein PXMP2/4 family.

The protein resides in the mitochondrion inner membrane. May be involved in cellular response to stress. Required to maintain mitochondrial DNA (mtDNA) integrity and stability. This Kluyveromyces lactis (strain ATCC 8585 / CBS 2359 / DSM 70799 / NBRC 1267 / NRRL Y-1140 / WM37) (Yeast) protein is Protein SYM1 (SYM1).